The following is a 98-amino-acid chain: Citrate lyase acyl carrier protein (98 aa).

S14 is subject to O-(phosphoribosyl dephospho-coenzyme A)serine.

It belongs to the CitD family. Oligomer with a subunit composition of (alpha,beta,gamma)6.

It localises to the cytoplasm. Functionally, covalent carrier of the coenzyme of citrate lyase. In Albidiferax ferrireducens (strain ATCC BAA-621 / DSM 15236 / T118) (Rhodoferax ferrireducens), this protein is Citrate lyase acyl carrier protein.